The chain runs to 501 residues: Glycerol kinase (501 aa).

Residue Thr16 coordinates ADP. Residues Thr16, Thr17, and Ser18 each coordinate ATP. A sn-glycerol 3-phosphate-binding site is contributed by Thr16. ADP is bound at residue Arg20. Residues Arg84, Glu85, Tyr135, and Asp242 each coordinate sn-glycerol 3-phosphate. Residues Arg84, Glu85, Tyr135, Asp242, and Gln243 each contribute to the glycerol site. Residues Thr264 and Gly307 each contribute to the ADP site. The ATP site is built by Thr264, Gly307, Gln311, and Gly408. Residue Gly408 participates in ADP binding.

The protein belongs to the FGGY kinase family.

It catalyses the reaction glycerol + ATP = sn-glycerol 3-phosphate + ADP + H(+). It functions in the pathway polyol metabolism; glycerol degradation via glycerol kinase pathway; sn-glycerol 3-phosphate from glycerol: step 1/1. Key enzyme in the regulation of glycerol uptake and metabolism. Catalyzes the phosphorylation of glycerol to yield sn-glycerol 3-phosphate. In Saccharolobus islandicus (strain M.16.27) (Sulfolobus islandicus), this protein is Glycerol kinase.